A 128-amino-acid chain; its full sequence is Sirohydrochlorin cobaltochelatase (128 aa).

Catalysis depends on His9, which acts as the Proton acceptor. Residue His9 participates in Co(2+) binding. Residues Lys43 and 68–73 each bind substrate; that span reads FATGTH. His73 serves as a coordination point for Co(2+).

Belongs to the CbiX family. CbiXS subfamily. In terms of assembly, homotetramer; dimer of dimers.

It carries out the reaction Co-sirohydrochlorin + 2 H(+) = sirohydrochlorin + Co(2+). Its pathway is cofactor biosynthesis; adenosylcobalamin biosynthesis; cob(II)yrinate a,c-diamide from sirohydrochlorin (anaerobic route): step 1/10. Catalyzes the insertion of Co(2+) into sirohydrochlorin as part of the anaerobic pathway to cobalamin biosynthesis. This chain is Sirohydrochlorin cobaltochelatase, found in Saccharolobus islandicus (strain Y.G.57.14 / Yellowstone #1) (Sulfolobus islandicus).